Reading from the N-terminus, the 67-residue chain is DNA-directed RNA polymerases I, II, and III subunit RPABC5 (67 aa).

Zn(2+) contacts are provided by Cys7, Cys10, Cys44, and Cys45.

This sequence belongs to the archaeal Rpo10/eukaryotic RPB10 RNA polymerase subunit family. Component of the RNA polymerase I (Pol I), RNA polymerase II (Pol II) and RNA polymerase III (Pol III) complexes consisting of at least 13, 12 and 17 subunits, respectively.

It is found in the nucleus. In terms of biological role, DNA-dependent RNA polymerase catalyzes the transcription of DNA into RNA using the four ribonucleoside triphosphates as substrates. Common component of RNA polymerases I, II and III which synthesize ribosomal RNA precursors, mRNA precursors and many functional non-coding RNAs, and a small RNAs, such as 5S rRNA and tRNAs, respectively. Pol II is the central component of the basal RNA polymerase II transcription machinery. Pols are composed of mobile elements that move relative to each other. In Pol II, Polr2L is part of the core element with the central large cleft. The chain is DNA-directed RNA polymerases I, II, and III subunit RPABC5 from Drosophila melanogaster (Fruit fly).